Here is a 148-residue protein sequence, read N- to C-terminus: Large ribosomal subunit protein bL9 (148 aa).

It belongs to the bacterial ribosomal protein bL9 family.

Binds to the 23S rRNA. The chain is Large ribosomal subunit protein bL9 from Thermobifida fusca (strain YX).